A 405-amino-acid chain; its full sequence is BRCA1-A complex subunit Abraxas 1 (405 aa).

Residues 7–154 (LGVLSGFVLG…CTHCLEHGLY (148 aa)) enclose the MPN domain. Residue S48 is modified to Phosphoserine. Positions 208–262 (SLKEVRKINEMYAAIQEELKTICQKVEQSEREVEKLLMDVNRLKEVRKKQQAQAK) form a coiled coil. Residues 333 to 405 (ASPAPAAPLS…DTDYPRSPTF (73 aa)) are disordered. 4 positions are modified to phosphoserine: S382, S383, S392, and S402. A compositionally biased stretch (acidic residues) spans 386–397 (IDTEVGSPEDDT). Positions 402–405 (SPTF) match the pSXXF motif motif.

This sequence belongs to the FAM175 family. Abraxas subfamily. In terms of assembly, component of the ARISC complex, at least composed of UIMC1/RAP80, ABRAXAS1, BRCC3/BRCC36, BABAM2 and BABAM1/NBA1. Component of the BRCA1-A complex, at least composed of the BRCA1, BARD1, UIMC1/RAP80, ABRAXAS1, BRCC3/BRCC36, BABAM2 and BABAM1/NBA1. In the complex, interacts directly with UIMC1/RAP80, BRCC3/BRCC36 and BABAM2. Homodimer. Interacts directly (when phosphorylated at Ser-402) with BRCA1. The phosphorylated homodimer can interact directly with two BRCA1 chains, giving rise to a heterotetramer. Binds polyubiquitin. Post-translationally, phosphorylation of Ser-402 of the pSXXF motif by ATM or ATR constitutes a specific recognition motif for the BRCT domain of BRCA1.

It localises to the nucleus. In terms of biological role, involved in DNA damage response and double-strand break (DSB) repair. Component of the BRCA1-A complex, acting as a central scaffold protein that assembles the various components of the complex and mediates the recruitment of BRCA1. The BRCA1-A complex specifically recognizes 'Lys-63'-linked ubiquitinated histones H2A and H2AX at DNA lesion sites, leading to target the BRCA1-BARD1 heterodimer to sites of DNA damage at DSBs. This complex also possesses deubiquitinase activity that specifically removes 'Lys-63'-linked ubiquitin on histones H2A and H2AX. The sequence is that of BRCA1-A complex subunit Abraxas 1 from Rattus norvegicus (Rat).